The primary structure comprises 217 residues: Phosphatase MT3486 (217 aa).

Asp-9 acts as the Nucleophile in catalysis.

Belongs to the HAD-like hydrolase superfamily.

Able to hydrolyze geranyl diphosphate (GPP), farnesyl diphosphate (FPP) and geranylgeranyl diphosphate (GGPP) to respectively yield geraniol, farnesol and geranylgeraniol. The polypeptide is Phosphatase MT3486 (Mycobacterium tuberculosis (strain CDC 1551 / Oshkosh)).